Consider the following 122-residue polypeptide: Large ribosomal subunit protein uL14c (122 aa).

This sequence belongs to the universal ribosomal protein uL14 family. Part of the 50S ribosomal subunit.

The protein localises to the plastid. In terms of biological role, binds to 23S rRNA. The protein is Large ribosomal subunit protein uL14c of Cuscuta exaltata (Tall dodder).